Consider the following 364-residue polypeptide: Probable protein disulfide-isomerase A6 (364 aa).

The first 28 residues, 1-28 (MKMEMHQIWSRIALASFAFAILFVSVSA), serve as a signal peptide directing secretion. Thioredoxin domains are found at residues 29 to 137 (DDVV…TEGG) and 139 to 256 (NVKI…EKSG). Residues cysteine 58, cysteine 61, cysteine 177, and cysteine 180 each act as nucleophile in the active site. 2 disulfide bridges follow: cysteine 58-cysteine 61 and cysteine 177-cysteine 180.

This sequence belongs to the protein disulfide isomerase family.

Its subcellular location is the endoplasmic reticulum lumen. The enzyme catalyses Catalyzes the rearrangement of -S-S- bonds in proteins.. This Medicago sativa (Alfalfa) protein is Probable protein disulfide-isomerase A6.